A 394-amino-acid chain; its full sequence is UPF0229 protein RBAM_009260 (394 aa).

It belongs to the UPF0229 family.

The polypeptide is UPF0229 protein RBAM_009260 (Bacillus velezensis (strain DSM 23117 / BGSC 10A6 / LMG 26770 / FZB42) (Bacillus amyloliquefaciens subsp. plantarum)).